The sequence spans 133 residues: MSAFIGSWKLCESQNFDEFLRELGVNFFIRKAASTSKPTITFDKFGDNGLKMKTETILKTTEQSFTFGEEFDETTIDGRQVKSTVTRDSDTQLTQVQKHDDGNTVIVRKIEGDMMVTTATFKNITSVRKYQRH.

This sequence belongs to the calycin superfamily. Fatty-acid binding protein (FABP) family.

This chain is Fatty acid-binding protein, found in Clonorchis sinensis (Chinese liver fluke).